The following is a 160-amino-acid chain: 2-C-methyl-D-erythritol 2,4-cyclodiphosphate synthase (160 aa).

Residues Asp11 and His13 each contribute to the a divalent metal cation site. 4-CDP-2-C-methyl-D-erythritol 2-phosphate contacts are provided by residues 11 to 13 (DIH) and 37 to 38 (HS). His45 is an a divalent metal cation binding site. 4-CDP-2-C-methyl-D-erythritol 2-phosphate-binding positions include 59 to 61 (DIG), 135 to 138 (TTNE), and Arg145.

The protein belongs to the IspF family. Homotrimer. Requires a divalent metal cation as cofactor.

It carries out the reaction 4-CDP-2-C-methyl-D-erythritol 2-phosphate = 2-C-methyl-D-erythritol 2,4-cyclic diphosphate + CMP. It participates in isoprenoid biosynthesis; isopentenyl diphosphate biosynthesis via DXP pathway; isopentenyl diphosphate from 1-deoxy-D-xylulose 5-phosphate: step 4/6. Functionally, involved in the biosynthesis of isopentenyl diphosphate (IPP) and dimethylallyl diphosphate (DMAPP), two major building blocks of isoprenoid compounds. Catalyzes the conversion of 4-diphosphocytidyl-2-C-methyl-D-erythritol 2-phosphate (CDP-ME2P) to 2-C-methyl-D-erythritol 2,4-cyclodiphosphate (ME-CPP) with a corresponding release of cytidine 5-monophosphate (CMP). This chain is 2-C-methyl-D-erythritol 2,4-cyclodiphosphate synthase, found in Synechococcus elongatus (strain ATCC 33912 / PCC 7942 / FACHB-805) (Anacystis nidulans R2).